The following is a 704-amino-acid chain: Elongation factor G (704 aa).

In terms of domain architecture, tr-type G spans 8 to 290 (ARYRNIGISA…AVVDYLPSPV (283 aa)). GTP-binding positions include 17–24 (AHIDAGKT), 88–92 (DTPGH), and 142–145 (NKMD).

The protein belongs to the TRAFAC class translation factor GTPase superfamily. Classic translation factor GTPase family. EF-G/EF-2 subfamily.

It is found in the cytoplasm. Catalyzes the GTP-dependent ribosomal translocation step during translation elongation. During this step, the ribosome changes from the pre-translocational (PRE) to the post-translocational (POST) state as the newly formed A-site-bound peptidyl-tRNA and P-site-bound deacylated tRNA move to the P and E sites, respectively. Catalyzes the coordinated movement of the two tRNA molecules, the mRNA and conformational changes in the ribosome. The polypeptide is Elongation factor G (Pectobacterium carotovorum subsp. carotovorum (strain PC1)).